We begin with the raw amino-acid sequence, 766 residues long: NADH-dependent flavin oxidoreductase iliE (766 aa).

A compositionally biased stretch (polar residues) spans 1-13 (MSEQLGSHITTPS). The disordered stretch occupies residues 1–24 (MSEQLGSHITTPSSHDDASKDKRP). Over residues 14-24 (SHDDASKDKRP) the composition is skewed to basic and acidic residues. A glycan (N-linked (GlcNAc...) asparagine) is linked at Asn30. FMN is bound at residue 61-64 (AATA). 2 N-linked (GlcNAc...) asparagine glycosylation sites follow: Asn70 and Asn136. Gln143 provides a ligand contact to FMN. A substrate-binding site is contributed by 224 to 227 (HAGH). Residue 385-386 (AR) participates in FMN binding. One can recognise a J domain in the interval 551–622 (TPYDILAMRK…SKRSLYDTQG (72 aa)). Residues Asn634, Asn650, and Asn654 are each glycosylated (N-linked (GlcNAc...) asparagine). A helical transmembrane segment spans residues 675–695 (MYMSNGVFATLVVMMCMIGAF).

This sequence belongs to the NADH:flavin oxidoreductase/NADH oxidase family.

The protein resides in the membrane. Functionally, NADH-dependent flavin oxidoreductase; part of the gene cluster that mediates the biosynthesis of ilicicolin H, a 4-hydroxy-2-pyridonealkaloid that has potent and broad antifungal activities by inhibiting the mitochondrial respiration chain. The biosynthesis of ilicicolin H starts with formation of the tetramic acid by the hybrid PKS-NRPS synthetase iliA with the partnering trans-enoyl reductase iliB since iliA lacks a designated enoylreductase (ER) domain. The cytochrome P450 monooxygenase iliC then catalyzes the ring expansion of the tetramate to the acyclic 2-pyridone. The pericyclase iliD further converts the acyclic 2-pyridone into 8-epi-ilicicolin H. 8-epi-ilicicolin H might then spontaneously convert to ilicicolin H since ilicicolin H is produced in the absence of the epimerase iliE, in contrast to what was observed for the Talaromyces variabilis ilicolin H biosynthetic pathway. The chain is NADH-dependent flavin oxidoreductase iliE from Neonectria sp. (strain DH2).